Reading from the N-terminus, the 188-residue chain is Adenine phosphoribosyltransferase (188 aa).

Belongs to the purine/pyrimidine phosphoribosyltransferase family. In terms of assembly, homodimer.

The protein resides in the cytoplasm. It carries out the reaction AMP + diphosphate = 5-phospho-alpha-D-ribose 1-diphosphate + adenine. It functions in the pathway purine metabolism; AMP biosynthesis via salvage pathway; AMP from adenine: step 1/1. Its function is as follows. Catalyzes a salvage reaction resulting in the formation of AMP, that is energically less costly than de novo synthesis. This Neisseria meningitidis serogroup A / serotype 4A (strain DSM 15465 / Z2491) protein is Adenine phosphoribosyltransferase.